We begin with the raw amino-acid sequence, 265 residues long: Mlc titration factor A (265 aa).

The Zn(2+) site is built by His111, His148, His152, and Glu211.

Belongs to the MtfA family. As to quaternary structure, interacts with Mlc. Zn(2+) is required as a cofactor.

The protein localises to the cytoplasm. In terms of biological role, involved in the modulation of the activity of the glucose-phosphotransferase system (glucose-PTS). Interacts with the transcriptional repressor Mlc, preventing its interaction with DNA and leading to the modulation of expression of genes regulated by Mlc, including ptsG, which encodes the PTS system glucose-specific EIICB component. Shows zinc-dependent metallopeptidase activity. This chain is Mlc titration factor A, found in Escherichia coli (strain ATCC 8739 / DSM 1576 / NBRC 3972 / NCIMB 8545 / WDCM 00012 / Crooks).